The chain runs to 313 residues: Protein EMSY-LIKE 2 (313 aa).

An ENT domain is found at 1–88 (MEAQIHILEQ…HQSLDVHPSP (88 aa)). Positions 35-58 (MTNLRKELRISDDENRQLLNNVHN) form a coiled coil. Disordered stretches follow at residues 84–106 (VHPSPTFSASRKKQKTFQSYPSI) and 195–229 (LNVGHGGGTTRGNRRTLSHGGRGRGPRTQPRREHL). The segment covering 206-219 (GNRRTLSHGGRGRG) has biased composition (basic residues). Positions 267 to 293 (HELDKAKKLLKEHEQALIAAIARLTDA) form a coiled coil. Residue Ser294 is modified to Phosphoserine. A disordered region spans residues 294-313 (SDYESDGEEPYSHELPMLLG).

In terms of assembly, interacts with EDM2 in nucleus.

The protein localises to the nucleus. Its function is as follows. Probably involved in the regulation of chromatin states. Contributes to RPP7-mediated and basal immunity, especially against Hyaloperonospora arabidopsidis isolate Hiks1. Regulates negatively EDM2-dependent floral transition. The chain is Protein EMSY-LIKE 2 from Arabidopsis thaliana (Mouse-ear cress).